A 402-amino-acid polypeptide reads, in one-letter code: Imidazolonepropionase (402 aa).

H66 and H68 together coordinate Fe(3+). H66 and H68 together coordinate Zn(2+). Residues R75, Y138, and H171 each coordinate 4-imidazolone-5-propanoate. Position 138 (Y138) interacts with N-formimidoyl-L-glutamate. H236 is a Fe(3+) binding site. H236 is a Zn(2+) binding site. Q239 lines the 4-imidazolone-5-propanoate pocket. D311 is a Fe(3+) binding site. D311 contributes to the Zn(2+) binding site. Residues N313 and G315 each coordinate N-formimidoyl-L-glutamate. T316 is a 4-imidazolone-5-propanoate binding site.

The protein belongs to the metallo-dependent hydrolases superfamily. HutI family. Zn(2+) serves as cofactor. It depends on Fe(3+) as a cofactor.

It is found in the cytoplasm. It carries out the reaction 4-imidazolone-5-propanoate + H2O = N-formimidoyl-L-glutamate. It participates in amino-acid degradation; L-histidine degradation into L-glutamate; N-formimidoyl-L-glutamate from L-histidine: step 3/3. Its function is as follows. Catalyzes the hydrolytic cleavage of the carbon-nitrogen bond in imidazolone-5-propanoate to yield N-formimidoyl-L-glutamate. It is the third step in the universal histidine degradation pathway. The sequence is that of Imidazolonepropionase from Pseudomonas paraeruginosa (strain DSM 24068 / PA7) (Pseudomonas aeruginosa (strain PA7)).